Consider the following 577-residue polypeptide: ABC transporter G family member 4 (577 aa).

The ABC transporter domain occupies 6–248; the sequence is LSTSSISYAK…LLSKGFTVPS (243 aa). 48-55 contacts ATP; it reads GPSGAGKS. The region spanning 299–509 is the ABC transmembrane type-2 domain; the sequence is TEISLLSSRF…ALDALLINEY (211 aa). Transmembrane regions (helical) follow at residues 318 to 338, 353 to 373, 400 to 420, 429 to 449, 458 to 478, 487 to 507, and 548 to 568; these read LLLTNILESLVVGLVLGTIYL, LFAFTLTFLLSSTTQTLPIFI, VFLPYLLLIAIIYSVSLYFLV, LAYFVLVIWIIVLMANSFVLF, IAGTSSVTILLAAFFLFSGYF, YWLFMYFFSMYKYALDALLIN, and FNVYMLLGFFVLYRVLCFLVL.

Belongs to the ABC transporter superfamily. ABCG family. Eye pigment precursor importer (TC 3.A.1.204) subfamily.

It is found in the membrane. The sequence is that of ABC transporter G family member 4 (ABCG4) from Arabidopsis thaliana (Mouse-ear cress).